Consider the following 602-residue polypeptide: Elongation factor 4 (602 aa).

Positions 2–184 (KHIRNFSIIA…AIVAKVPAPR (183 aa)) constitute a tr-type G domain. Residues 14-19 (DHGKST) and 131-134 (NKMD) contribute to the GTP site.

It belongs to the TRAFAC class translation factor GTPase superfamily. Classic translation factor GTPase family. LepA subfamily.

It is found in the cell inner membrane. The enzyme catalyses GTP + H2O = GDP + phosphate + H(+). Functionally, required for accurate and efficient protein synthesis under certain stress conditions. May act as a fidelity factor of the translation reaction, by catalyzing a one-codon backward translocation of tRNAs on improperly translocated ribosomes. Back-translocation proceeds from a post-translocation (POST) complex to a pre-translocation (PRE) complex, thus giving elongation factor G a second chance to translocate the tRNAs correctly. Binds to ribosomes in a GTP-dependent manner. In Verminephrobacter eiseniae (strain EF01-2), this protein is Elongation factor 4.